A 218-amino-acid chain; its full sequence is Lactosylceramide 4-alpha-galactosyltransferase (218 aa).

The DXD motif motif lies at 57-59 (DTD).

This sequence belongs to the glycosyltransferase 32 family.

It localises to the golgi apparatus membrane. It carries out the reaction a beta-D-Gal-(1-&gt;4)-beta-D-Glc-(1&lt;-&gt;1)-Cer(d18:1(4E)) + UDP-alpha-D-galactose = a globoside Gb3Cer (d18:1(4E)) + UDP + H(+). The catalysed reaction is a beta-D-Gal-(1&lt;-&gt;1')-ceramide + UDP-alpha-D-galactose = alpha-D-Gal-(1-&gt;4)-beta-D-Gal-(1&lt;-&gt;1')-Cer + UDP + H(+). The protein operates within glycolipid biosynthesis. Its function is as follows. Catalyzes the transfer of galactose from UDP-alpha-D-galactose to lactosylceramide/beta-D-galactosyl-(1-&gt;4)-beta-D-glucosyl-(1&lt;-&gt;1)-ceramide(d18:1(4E)) to produce globotriaosylceramide/globoside Gb3Cer (d18:1(4E)). Also able to transfer galactose to galactosylceramide/beta-D-Gal-(1&lt;-&gt;1')-Cer. Globoside Gb3Cer is a glycosphingolipid of the globo serie, one of the major types of neutral root structures of glycosphingolipids, that constitute a significant portion of mammalian cell membranes. This is Lactosylceramide 4-alpha-galactosyltransferase (A4GALT) from Pongo pygmaeus (Bornean orangutan).